Consider the following 313-residue polypeptide: Ribosomal RNA small subunit methyltransferase H (313 aa).

S-adenosyl-L-methionine contacts are provided by residues 35-37, Asp55, Phe81, Asp103, and Gln110; that span reads GGH.

It belongs to the methyltransferase superfamily. RsmH family.

The protein localises to the cytoplasm. It carries out the reaction cytidine(1402) in 16S rRNA + S-adenosyl-L-methionine = N(4)-methylcytidine(1402) in 16S rRNA + S-adenosyl-L-homocysteine + H(+). Functionally, specifically methylates the N4 position of cytidine in position 1402 (C1402) of 16S rRNA. This chain is Ribosomal RNA small subunit methyltransferase H, found in Pseudomonas syringae pv. syringae (strain B728a).